A 551-amino-acid chain; its full sequence is GMP synthase [glutamine-hydrolyzing] (551 aa).

Residues 1–28 (MTSSPTAAARTEGEAAPTVPTQVESGTA) are disordered. The span at 19–28 (VPTQVESGTA) shows a compositional bias: polar residues. One can recognise a Glutamine amidotransferase type-1 domain in the interval 37–227 (MVAILDFGSQ…VYHICGCEPE (191 aa)). The active-site Nucleophile is Cys-114. Residues His-201 and Glu-203 contribute to the active site. Residues 228–426 (WTTAAFIEEA…LGLPEEIVQR (199 aa)) form the GMPS ATP-PPase domain. Position 255–261 (255–261 (SGGVDSS)) interacts with ATP.

Homodimer.

The enzyme catalyses XMP + L-glutamine + ATP + H2O = GMP + L-glutamate + AMP + diphosphate + 2 H(+). Its pathway is purine metabolism; GMP biosynthesis; GMP from XMP (L-Gln route): step 1/1. Its function is as follows. Catalyzes the synthesis of GMP from XMP. The chain is GMP synthase [glutamine-hydrolyzing] from Gloeobacter violaceus (strain ATCC 29082 / PCC 7421).